The sequence spans 471 residues: Mannose-1-phosphate guanylyltransferase (471 aa).

This sequence belongs to the mannose-6-phosphate isomerase type 2 family.

The enzyme catalyses alpha-D-mannose 1-phosphate + GTP + H(+) = GDP-alpha-D-mannose + diphosphate. It participates in nucleotide-sugar biosynthesis; GDP-alpha-D-mannose biosynthesis; GDP-alpha-D-mannose from alpha-D-mannose 1-phosphate (GTP route): step 1/1. The protein operates within bacterial outer membrane biogenesis; LPS O-antigen biosynthesis. In terms of biological role, involved in GDP-mannose biosynthesis which serves as the activated sugar nucleotide precursor for mannose residues in cell surface polysaccharides. This enzyme participates in synthesis of the LPS O9 antigen. The chain is Mannose-1-phosphate guanylyltransferase (manC) from Escherichia coli.